The primary structure comprises 529 residues: Beta-galactoside alpha-2,6-sialyltransferase 2 (529 aa).

Residues 1–11 (MKPHLKQWRQR) are Cytoplasmic-facing. A helical; Signal-anchor for type II membrane protein membrane pass occupies residues 12 to 32 (MLFGIFAWGLLFLLIFIYFTD). The Lumenal segment spans residues 33–529 (SNPAEPVPSS…PAPSPVIPHS (497 aa)). Ser-69 carries an O-linked (GalNAc...) serine glycan. A glycan (N-linked (GlcNAc...) asparagine) is linked at Asn-211. Intrachain disulfides connect Cys-253–Cys-519, Cys-296–Cys-448, and Cys-466–Cys-477.

The protein belongs to the glycosyltransferase 29 family. Post-translationally, O-glycosylated. As to expression, weakly expressed in some tissues, such as small intestine, colon and fetal brain.

It localises to the golgi apparatus. Its subcellular location is the golgi stack membrane. It carries out the reaction a beta-D-galactoside + CMP-N-acetyl-beta-neuraminate = an N-acetyl-alpha-neuraminyl-(2-&gt;6)-beta-D-galactosyl derivative + CMP + H(+). Its function is as follows. Transfers sialic acid from the donor of substrate CMP-sialic acid to galactose containing acceptor substrates. Has alpha-2,6-sialyltransferase activity toward oligosaccharides that have the Gal-beta-1,4-GlcNAc sequence at the non-reducing end of their carbohydrate groups, but it has weak or no activities toward glycoproteins and glycolipids. The sequence is that of Beta-galactoside alpha-2,6-sialyltransferase 2 (ST6GAL2) from Homo sapiens (Human).